A 406-amino-acid chain; its full sequence is Proteasome-activating nucleotidase 1 (406 aa).

The segment covering 1-12 has biased composition (acidic residues); that stretch reads MTDTVEDVELPY. Residues 1–20 form a disordered region; it reads MTDTVEDVELPYDDSASQQD. Residues 12–70 are a coiled coil; it reads YDDSASQQDKLEALEEQLSTLEEENEEMRDRLLDANAENNKYQQKLERLSHENKKLKQS. ATP is bound by residues 192–197 and His331; that span reads GTGKTL. The segment at 385–406 is disordered; it reads AREKLDQDSEPAAATDVSRTFA. The docks into pockets in the proteasome alpha-ring to cause gate opening stretch occupies residues 404–406; it reads TFA.

It belongs to the AAA ATPase family. Homohexamer. The hexameric complex has a two-ring architecture resembling a top hat that caps the 20S proteasome core at one or both ends. Upon ATP-binding, the C-terminus of PAN interacts with the alpha-rings of the proteasome core by binding to the intersubunit pockets.

The protein resides in the cytoplasm. ATPase which is responsible for recognizing, binding, unfolding and translocation of substrate proteins into the archaeal 20S proteasome core particle. Is essential for opening the gate of the 20S proteasome via an interaction with its C-terminus, thereby allowing substrate entry and access to the site of proteolysis. Thus, the C-termini of the proteasomal ATPase function like a 'key in a lock' to induce gate opening and therefore regulate proteolysis. Unfolding activity requires energy from ATP hydrolysis, whereas ATP binding alone promotes ATPase-20S proteasome association which triggers gate opening, and supports translocation of unfolded substrates. In Halobacterium salinarum (strain ATCC 700922 / JCM 11081 / NRC-1) (Halobacterium halobium), this protein is Proteasome-activating nucleotidase 1.